The chain runs to 70 residues: Translational regulator CsrA (70 aa).

This sequence belongs to the CsrA/RsmA family. As to quaternary structure, homodimer; the beta-strands of each monomer intercalate to form a hydrophobic core, while the alpha-helices form wings that extend away from the core.

It is found in the cytoplasm. A translational regulator that binds mRNA to regulate translation initiation and/or mRNA stability. Usually binds in the 5'-UTR at or near the Shine-Dalgarno sequence preventing ribosome-binding, thus repressing translation. Its main target seems to be the major flagellin gene, while its function is anatagonized by FliW. In Rhodopirellula baltica (strain DSM 10527 / NCIMB 13988 / SH1), this protein is Translational regulator CsrA.